The sequence spans 93 residues: Precursor of CEP13 (93 aa).

Positions 1 to 27 (MARPRISISMICLLILIVGFVLQSSQA) are cleaved as a signal peptide. Residues 28-78 (RKVLVPYGTSKGLFLSALPKGNVPPSGPSDKGHTSPPDDTDQRMVPENSPE) constitute a propeptide that is removed on maturation. Residues 45-93 (LPKGNVPPSGPSDKGHTSPPDDTDQRMVPENSPEIYRRLESVPSPGVGH) form a disordered region. P87 and P89 each carry hydroxyproline.

The protein belongs to the C-terminally encoded plant signaling peptide (CEP) family. In terms of assembly, interacts with CEP receptors (e.g. CEPR1 and CEPR2). The mature small signaling peptide is generated by proteolytic processing of the longer precursor.

It is found in the secreted. The protein resides in the extracellular space. Its subcellular location is the apoplast. Extracellular signaling peptide that may regulate primary root growth rate and systemic nitrogen (N)-demand signaling. In Arabidopsis thaliana (Mouse-ear cress), this protein is Precursor of CEP13.